The primary structure comprises 817 residues: Ribonuclease R 1 (817 aa).

In terms of domain architecture, RNB spans 259–584 (RVDYRNEITF…DLLVHRLIRE (326 aa)). Residues 637–717 (GEEYEGIIAS…MTGEIDFEYL (81 aa)) form the S1 motif domain. Positions 728–817 (AKAKKKPDHK…DGRKKPHKRG (90 aa)) are disordered. The segment covering 729–742 (KAKKKPDHKGRKKS) has biased composition (basic residues). Composition is skewed to basic and acidic residues over residues 767 to 777 (RRADEKFEFDK) and 795 to 810 (KFTDKKDNGKKFTDGR).

This sequence belongs to the RNR ribonuclease family. RNase R subfamily.

It localises to the cytoplasm. It carries out the reaction Exonucleolytic cleavage in the 3'- to 5'-direction to yield nucleoside 5'-phosphates.. Its function is as follows. 3'-5' exoribonuclease that releases 5'-nucleoside monophosphates and is involved in maturation of structured RNAs. The chain is Ribonuclease R 1 (rnr1) from Lactococcus lactis subsp. lactis (strain IL1403) (Streptococcus lactis).